A 394-amino-acid polypeptide reads, in one-letter code: Putative 8-amino-7-oxononanoate synthase (394 aa).

Arg21 contributes to the substrate binding site. 107–108 contributes to the pyridoxal 5'-phosphate binding site; the sequence is GY. His132 lines the substrate pocket. Pyridoxal 5'-phosphate-binding positions include Ser180, 205–208, and 236–239; these read DEAH and TLSK. The residue at position 239 (Lys239) is an N6-(pyridoxal phosphate)lysine. Thr361 contacts substrate.

Belongs to the class-II pyridoxal-phosphate-dependent aminotransferase family. BioF subfamily. Homodimer. It depends on pyridoxal 5'-phosphate as a cofactor.

It carries out the reaction 6-carboxyhexanoyl-[ACP] + L-alanine + H(+) = (8S)-8-amino-7-oxononanoate + holo-[ACP] + CO2. The protein operates within cofactor biosynthesis; biotin biosynthesis. Functionally, catalyzes the decarboxylative condensation of pimeloyl-[acyl-carrier protein] and L-alanine to produce 8-amino-7-oxononanoate (AON), [acyl-carrier protein], and carbon dioxide. The chain is Putative 8-amino-7-oxononanoate synthase (bioF) from Acaryochloris marina (strain MBIC 11017).